Reading from the N-terminus, the 217-residue chain is MTHDAAIGRLIKARTISDAWYRGLNVIWNHGSLITDERGSQIREFMNLMVVIEDPYSNEIPEDSAWNHERLEEYAKQLITGENAQDFEYTYGQRLRNWDGKVDQIEYVIEKLTNNKTTRRATAVTWVPTIDTKVDEVPCMIIDDFKIRDDTVHLTTLFRSHDFAGAYPANLYGLSKLLEYVADKVGLAPGTITTMSVSAHIYDHDWDKIEKIIKGVQ.

Cysteine 139 is a catalytic residue.

It belongs to the thymidylate synthase family. Archaeal-type ThyA subfamily. Monomer.

It is found in the cytoplasm. It participates in pyrimidine metabolism; dTTP biosynthesis. In terms of biological role, may catalyze the biosynthesis of dTMP using an unknown cosubstrate. The sequence is that of Putative thymidylate synthase from Methanococcoides burtonii (strain DSM 6242 / NBRC 107633 / OCM 468 / ACE-M).